The following is a 459-amino-acid chain: Putrescine aminotransferase (459 aa).

Residues 150-151 (GT) and glutamine 274 each bind pyridoxal 5'-phosphate. Lysine 300 carries the N6-(pyridoxal phosphate)lysine modification. Threonine 332 contacts pyridoxal 5'-phosphate.

It belongs to the class-III pyridoxal-phosphate-dependent aminotransferase family. Putrescine aminotransferase subfamily. Pyridoxal 5'-phosphate serves as cofactor.

It carries out the reaction an alkane-alpha,omega-diamine + 2-oxoglutarate = an omega-aminoaldehyde + L-glutamate. It catalyses the reaction putrescine + 2-oxoglutarate = 1-pyrroline + L-glutamate + H2O. The enzyme catalyses cadaverine + 2-oxoglutarate = 5-aminopentanal + L-glutamate. It participates in amine and polyamine degradation; putrescine degradation; 4-aminobutanal from putrescine (transaminase route): step 1/1. In terms of biological role, catalyzes the aminotransferase reaction from putrescine to 2-oxoglutarate, leading to glutamate and 4-aminobutanal, which spontaneously cyclizes to form 1-pyrroline. This is the first step in one of two pathways for putrescine degradation, where putrescine is converted into 4-aminobutanoate (gamma-aminobutyrate or GABA) via 4-aminobutanal. Also functions as a cadaverine transaminase in a a L-lysine degradation pathway to succinate that proceeds via cadaverine, glutarate and L-2-hydroxyglutarate. The polypeptide is Putrescine aminotransferase (Shigella flexneri serotype 5b (strain 8401)).